The chain runs to 593 residues: UvrABC system protein C (593 aa).

Positions 14 to 91 (DSPGCYLHKD…IQENMPKYNI (78 aa)) constitute a GIY-YIG domain. Residues 196–231 (NKIVNGLTEKMKSAAMTMEFERAAEYRDLIEAISLL) form the UVR domain.

The protein belongs to the UvrC family. In terms of assembly, interacts with UvrB in an incision complex.

Its subcellular location is the cytoplasm. Its function is as follows. The UvrABC repair system catalyzes the recognition and processing of DNA lesions. UvrC both incises the 5' and 3' sides of the lesion. The N-terminal half is responsible for the 3' incision and the C-terminal half is responsible for the 5' incision. The sequence is that of UvrABC system protein C from Streptococcus agalactiae serotype III (strain NEM316).